Here is a 333-residue protein sequence, read N- to C-terminus: Adenosine deaminase (333 aa).

Zn(2+) contacts are provided by His12 and His14. His14, Asp16, and Gly170 together coordinate substrate. His197 lines the Zn(2+) pocket. The Proton donor role is filled by Glu200. Residue Asp278 coordinates Zn(2+). Position 279 (Asp279) interacts with substrate.

This sequence belongs to the metallo-dependent hydrolases superfamily. Adenosine and AMP deaminases family. Adenosine deaminase subfamily. The cofactor is Zn(2+).

It catalyses the reaction adenosine + H2O + H(+) = inosine + NH4(+). The catalysed reaction is 2'-deoxyadenosine + H2O + H(+) = 2'-deoxyinosine + NH4(+). Catalyzes the hydrolytic deamination of adenosine and 2-deoxyadenosine. This chain is Adenosine deaminase, found in Klebsiella pneumoniae subsp. pneumoniae (strain ATCC 700721 / MGH 78578).